The following is a 440-amino-acid chain: Serine hydroxymethyltransferase (440 aa).

(6S)-5,6,7,8-tetrahydrofolate contacts are provided by residues Leu119 and 123 to 125; that span reads GHL. Residue Lys228 is modified to N6-(pyridoxal phosphate)lysine. 370-372 lines the (6S)-5,6,7,8-tetrahydrofolate pocket; sequence SPF.

This sequence belongs to the SHMT family. As to quaternary structure, homodimer. Requires pyridoxal 5'-phosphate as cofactor.

It localises to the cytoplasm. It carries out the reaction (6R)-5,10-methylene-5,6,7,8-tetrahydrofolate + glycine + H2O = (6S)-5,6,7,8-tetrahydrofolate + L-serine. The protein operates within one-carbon metabolism; tetrahydrofolate interconversion. Its pathway is amino-acid biosynthesis; glycine biosynthesis; glycine from L-serine: step 1/1. Its function is as follows. Catalyzes the reversible interconversion of serine and glycine with tetrahydrofolate (THF) serving as the one-carbon carrier. This reaction serves as the major source of one-carbon groups required for the biosynthesis of purines, thymidylate, methionine, and other important biomolecules. Also exhibits THF-independent aldolase activity toward beta-hydroxyamino acids, producing glycine and aldehydes, via a retro-aldol mechanism. In Chlorobaculum parvum (strain DSM 263 / NCIMB 8327) (Chlorobium vibrioforme subsp. thiosulfatophilum), this protein is Serine hydroxymethyltransferase.